The chain runs to 162 residues: Phosphopantetheine adenylyltransferase (162 aa).

S11 is a binding site for substrate. ATP-binding positions include 11–12 and H19; that span reads SF. Substrate-binding residues include K43, V76, and R90. Residues 91 to 93, E101, and 126 to 132 each bind ATP; these read GLR and HLYISSS.

The protein belongs to the bacterial CoaD family. As to quaternary structure, homohexamer. Mg(2+) is required as a cofactor.

Its subcellular location is the cytoplasm. It catalyses the reaction (R)-4'-phosphopantetheine + ATP + H(+) = 3'-dephospho-CoA + diphosphate. It functions in the pathway cofactor biosynthesis; coenzyme A biosynthesis; CoA from (R)-pantothenate: step 4/5. Reversibly transfers an adenylyl group from ATP to 4'-phosphopantetheine, yielding dephospho-CoA (dPCoA) and pyrophosphate. The protein is Phosphopantetheine adenylyltransferase of Streptococcus pneumoniae (strain ATCC 700669 / Spain 23F-1).